Here is a 2327-residue protein sequence, read N- to C-terminus: Pre-mRNA-processing-splicing factor 8 homolog (2327 aa).

Residues 1-14 (MDDTNSNINQSNES) show a composition bias toward polar residues. Positions 1-20 (MDDTNSNINQSNESQHLEEK) are disordered. Residues 801 to 1292 (TTVHWLEKRR…KIQTRVKIGL (492 aa)) are reverse transcriptase homology domain. The linker stretch occupies residues 1293–1566 (NSKMPNRFPP…TLKISLIQIF (274 aa)). Positions 1502–1515 (MKYKKLTHAQRSGL) are important for branch point selection. The restriction endonuclease homology domain stretch occupies residues 1570–1740 (LWQKIHESLV…LRERIRKGLQ (171 aa)). Positions 1657–2023 (GDFDSHDIER…QIAEIEKQKT (367 aa)) are involved in interaction with pre-mRNA 5' splice site. Residues 1755–2008 (NFGELFSNKI…ILGMEISAPS (254 aa)) form an RNase H homology domain region. An MPN domain is found at 2093–2223 (TYVFPKNILK…LTAYHLTPSG (131 aa)).

Part of the U5 snRNP complex and of the U4/U6-U5 tri-snRNP complex.

The protein localises to the nucleus speckle. Functions as a scaffold that mediates the ordered assembly of spliceosomal proteins and snRNAs. Required for the assembly of the U4/U6-U5 tri-snRNP complex. Functions as a scaffold that positions spliceosomal U2, U5 and U6 snRNAs at splice sites on pre-mRNA substrates, so that splicing can occur. Interacts with both the 5' and the 3' splice site. This is Pre-mRNA-processing-splicing factor 8 homolog (prpf8) from Dictyostelium discoideum (Social amoeba).